The primary structure comprises 216 residues: MSCLPALDKFLQNYHQAYLTTLGELPRYYPQGEPSVCIQGEFFADSDKPIAWQPVKRDEVGSFTNVEHALDLPLWPDIHLFYGQYFSAPLLFDSKWGTGELLQVWNDDDFKCLQQNVIGHLMMKKKLKQPPTWFIGLLDEGDKMLTINNSDGSVWIEIPGEEQSEQLSTSLTAFIEALSPRIAPPVKHEELPMPALDHPGIFANIKRMWQNLFGKS.

This sequence belongs to the Syd family.

The protein resides in the cell inner membrane. Its function is as follows. Interacts with the SecY protein in vivo. May bind preferentially to an uncomplexed state of SecY, thus functioning either as a chelating agent for excess SecY in the cell or as a regulatory factor that negatively controls the translocase function. The sequence is that of Protein Syd from Shewanella putrefaciens (strain CN-32 / ATCC BAA-453).